Here is a 1415-residue protein sequence, read N- to C-terminus: Uveal autoantigen with coiled-coil domains and ankyrin repeats (1415 aa).

ANK repeat units follow at residues Glu69–Thr98, Ala102–His131, Gln135–Ala164, Asp168–Ser197, and Gln201–Leu230. The stretch at Val288–Lys376 forms a coiled coil. One copy of the ANK 6 repeat lies at Glu617–Val646. Residues Thr759 to Ala1381 adopt a coiled-coil conformation. Lys1034 is covalently cross-linked (Glycyl lysine isopeptide (Lys-Gly) (interchain with G-Cter in SUMO2)). A compositionally biased stretch (basic and acidic residues) spans Leu1186 to Ser1201. The segment at Leu1186–Ser1205 is disordered.

In terms of assembly, component of the apoptosome complex, composed of APAF1, pro-caspase-9 and UACA. In the complex, it probably interacts directly with APAF1. Interacts with LGALS3, ARF6 and ACTB. Interacts with RAB39A. In terms of tissue distribution, highly expressed in adrenal, testis, kidney and large intestine.

Its subcellular location is the nucleus. It localises to the cytoplasm. It is found in the cytoskeleton. In terms of biological role, regulates APAF1 expression and plays an important role in the regulation of stress-induced apoptosis. Promotes apoptosis by regulating three pathways, apoptosome up-regulation, LGALS3/galectin-3 down-regulation and NF-kappa-B inactivation. Regulates the redistribution of APAF1 into the nucleus after proapoptotic stress. Down-regulates the expression of LGALS3 by inhibiting NFKB1. Its function is as follows. Modulates isoactin dynamics to regulate the morphological alterations required for cell growth and motility. Interaction with ARF6 may modulate cell shape and motility after injury. May be involved in multiple neurite formation. The polypeptide is Uveal autoantigen with coiled-coil domains and ankyrin repeats (UACA) (Canis lupus familiaris (Dog)).